Consider the following 158-residue polypeptide: C-type lectin BfL-2 (158 aa).

A signal peptide spans 1-21 (MGHFTFIGLCLLAMFLSLSGA). 4 disulfide bridges follow: C26–C37, C54–C154, C61–C156, and C129–C146. The region spanning 33 to 155 (KNGLCYKVFS…CETLHPFICQ (123 aa)) is the C-type lectin domain. The Mannose-binding signature appears at 119–121 (EPN). N-linked (GlcNAc...) asparagine glycosylation is present at N121. 3 residues coordinate Ca(2+): E127, N142, and D143.

This sequence belongs to the true venom lectin family. Homodimer; non-covalently linked. In terms of tissue distribution, expressed by the venom gland.

The protein resides in the secreted. Functionally, mannose-binding lectin which recognizes specific carbohydrate structures and agglutinates a variety of animal cells by binding to cell-surface glycoproteins and glycolipids. May be a calcium-dependent lectin. The chain is C-type lectin BfL-2 from Bungarus fasciatus (Banded krait).